Consider the following 469-residue polypeptide: 3-isopropylmalate dehydratase large subunit (469 aa).

[4Fe-4S] cluster contacts are provided by cysteine 347, cysteine 407, and cysteine 410.

This sequence belongs to the aconitase/IPM isomerase family. LeuC type 1 subfamily. In terms of assembly, heterodimer of LeuC and LeuD. It depends on [4Fe-4S] cluster as a cofactor.

The catalysed reaction is (2R,3S)-3-isopropylmalate = (2S)-2-isopropylmalate. It participates in amino-acid biosynthesis; L-leucine biosynthesis; L-leucine from 3-methyl-2-oxobutanoate: step 2/4. Functionally, catalyzes the isomerization between 2-isopropylmalate and 3-isopropylmalate, via the formation of 2-isopropylmaleate. In Prochlorococcus marinus (strain NATL2A), this protein is 3-isopropylmalate dehydratase large subunit.